The sequence spans 301 residues: N-acetylmuramic acid 6-phosphate etherase (301 aa).

Positions 57-220 (IAEAFRQGGR…TTGAMIRTGK (164 aa)) constitute an SIS domain. Glutamate 85 (proton donor) is an active-site residue. The active site involves glutamate 116.

The protein belongs to the GCKR-like family. MurNAc-6-P etherase subfamily. In terms of assembly, homodimer.

It carries out the reaction N-acetyl-D-muramate 6-phosphate + H2O = N-acetyl-D-glucosamine 6-phosphate + (R)-lactate. Its pathway is amino-sugar metabolism; 1,6-anhydro-N-acetylmuramate degradation. It participates in amino-sugar metabolism; N-acetylmuramate degradation. The protein operates within cell wall biogenesis; peptidoglycan recycling. Functionally, specifically catalyzes the cleavage of the D-lactyl ether substituent of MurNAc 6-phosphate, producing GlcNAc 6-phosphate and D-lactate. Together with AnmK, is also required for the utilization of anhydro-N-acetylmuramic acid (anhMurNAc) either imported from the medium or derived from its own cell wall murein, and thus plays a role in cell wall recycling. In Photorhabdus laumondii subsp. laumondii (strain DSM 15139 / CIP 105565 / TT01) (Photorhabdus luminescens subsp. laumondii), this protein is N-acetylmuramic acid 6-phosphate etherase.